A 698-amino-acid polypeptide reads, in one-letter code: DNA-directed RNA polymerase subunit beta' (698 aa).

Residues Cys69, Cys71, Cys89, and Cys92 each coordinate Zn(2+). Positions 509, 511, and 513 each coordinate Mg(2+).

The protein belongs to the RNA polymerase beta' chain family. RpoC1 subfamily. In plastids the minimal PEP RNA polymerase catalytic core is composed of four subunits: alpha, beta, beta', and beta''. When a (nuclear-encoded) sigma factor is associated with the core the holoenzyme is formed, which can initiate transcription. The cofactor is Mg(2+). Requires Zn(2+) as cofactor.

Its subcellular location is the plastid. It localises to the chloroplast. The catalysed reaction is RNA(n) + a ribonucleoside 5'-triphosphate = RNA(n+1) + diphosphate. DNA-dependent RNA polymerase catalyzes the transcription of DNA into RNA using the four ribonucleoside triphosphates as substrates. The protein is DNA-directed RNA polymerase subunit beta' of Cryptomeria japonica (Japanese cedar).